Consider the following 287-residue polypeptide: mRNA-capping enzyme small subunit (287 aa).

As to quaternary structure, heterodimer of a large and a small subunit.

It localises to the virion. It carries out the reaction a 5'-end (5'-triphosphoguanosine)-ribonucleoside in mRNA + S-adenosyl-L-methionine = a 5'-end (N(7)-methyl 5'-triphosphoguanosine)-ribonucleoside in mRNA + S-adenosyl-L-homocysteine. In terms of biological role, catalyzes the last reaction in the mRNA cap formation pathway. The chain is mRNA-capping enzyme small subunit from Sus scrofa (Pig).